A 321-amino-acid chain; its full sequence is GDP-L-fucose synthase (321 aa).

14–20 serves as a coordination point for NADP(+); sequence GGSGLVG. Catalysis depends on Tyr143, which acts as the Proton donor/acceptor. NADP(+) is bound by residues Lys147, 170 to 173, and His186; that span reads PTNV. Positions 194, 208, 215, and 277 each coordinate substrate.

Belongs to the NAD(P)-dependent epimerase/dehydratase family. Fucose synthase subfamily. In terms of assembly, homodimer.

It carries out the reaction GDP-beta-L-fucose + NADP(+) = GDP-4-dehydro-alpha-D-rhamnose + NADPH + H(+). It participates in nucleotide-sugar biosynthesis; GDP-L-fucose biosynthesis via de novo pathway; GDP-L-fucose from GDP-alpha-D-mannose: step 2/2. Functionally, catalyzes the two-step NADP-dependent conversion of GDP-4-dehydro-6-deoxy-D-mannose to GDP-fucose, involving an epimerase and a reductase reaction. The sequence is that of GDP-L-fucose synthase (GFUS) from Cricetulus griseus (Chinese hamster).